The primary structure comprises 398 residues: Lysophospholipid transporter LplT (398 aa).

A run of 12 helical transmembrane segments spans residues 19–39, 53–73, 96–116, 139–159, 164–184, 195–213, 227–247, 257–277, 281–301, 304–324, 352–372, and 373–393; these read VIVAQFLSAFGDNALLFATLA, VLQMVFVGAYILFAPFVGQIA, ICLGVNPFVGYTLVGIGAAAY, LMEASTIAAILLGSVAGGVLA, IAALVACTLAYAGAVVANLFI, SWQLAAMIRSFFCACVVLW, LFWGAGVTLRFLVVLWVPVAL, YLNAMVAVGIVVGAGAAAKLV, TVSRCMPAGILIGVVVAMFSL, ALLPAYALLLLIGILGGFFVV, NSTMLLMLGLYSLAVMVGVPA, and VATGIGFGVLFALAIAALWIW.

Belongs to the major facilitator superfamily. LplT (TC 2.A.1.42) family.

The protein localises to the cell inner membrane. Its function is as follows. Catalyzes the facilitated diffusion of 2-acyl-glycero-3-phosphoethanolamine (2-acyl-GPE) into the cell. This chain is Lysophospholipid transporter LplT, found in Salmonella arizonae (strain ATCC BAA-731 / CDC346-86 / RSK2980).